The primary structure comprises 127 residues: Fluoride-specific ion channel FluC 2 (127 aa).

4 helical membrane-spanning segments follow: residues 4–24 (IIAITGFAMLGGGLREGLSLL), 31–51 (FWITCLINIVGAFVLSLITNL), 62–82 (IVIGMSVGFVGSFTTFSTFTF), and 94–114 (VLALSYVAASLGLGLLAGLAG). G72 and T75 together coordinate Na(+).

It belongs to the fluoride channel Fluc/FEX (TC 1.A.43) family.

It localises to the cell membrane. The enzyme catalyses fluoride(in) = fluoride(out). Na(+) is not transported, but it plays an essential structural role and its presence is essential for fluoride channel function. Functionally, fluoride-specific ion channel. Important for reducing fluoride concentration in the cell, thus reducing its toxicity. This chain is Fluoride-specific ion channel FluC 2, found in Lactiplantibacillus plantarum (strain ATCC BAA-793 / NCIMB 8826 / WCFS1) (Lactobacillus plantarum).